A 197-amino-acid polypeptide reads, in one-letter code: Large ribosomal subunit protein bL25 (197 aa).

This sequence belongs to the bacterial ribosomal protein bL25 family. CTC subfamily. In terms of assembly, part of the 50S ribosomal subunit; part of the 5S rRNA/L5/L18/L25 subcomplex. Contacts the 5S rRNA. Binds to the 5S rRNA independently of L5 and L18.

Its function is as follows. This is one of the proteins that binds to the 5S RNA in the ribosome where it forms part of the central protuberance. The sequence is that of Large ribosomal subunit protein bL25 from Pseudomonas putida (strain ATCC 700007 / DSM 6899 / JCM 31910 / BCRC 17059 / LMG 24140 / F1).